A 227-amino-acid polypeptide reads, in one-letter code: 2,3-bisphosphoglycerate-dependent phosphoglycerate mutase (227 aa).

Residues 8-15 (RHGKSVWN), 21-22 (TG), arginine 58, 110-113 (ERMY), lysine 121, 137-138 (RR), and 181-182 (GN) contribute to the substrate site. Histidine 9 (tele-phosphohistidine intermediate) is an active-site residue. Glutamate 110 serves as the catalytic Proton donor/acceptor.

It belongs to the phosphoglycerate mutase family. BPG-dependent PGAM subfamily.

It catalyses the reaction (2R)-2-phosphoglycerate = (2R)-3-phosphoglycerate. It participates in carbohydrate degradation; glycolysis; pyruvate from D-glyceraldehyde 3-phosphate: step 3/5. Functionally, catalyzes the interconversion of 2-phosphoglycerate and 3-phosphoglycerate. The polypeptide is 2,3-bisphosphoglycerate-dependent phosphoglycerate mutase (Chlamydia caviae (strain ATCC VR-813 / DSM 19441 / 03DC25 / GPIC) (Chlamydophila caviae)).